The following is a 317-amino-acid chain: 3-oxoacyl-[acyl-carrier-protein] reductase 5, chloroplastic (317 aa).

The transit peptide at 1–57 directs the protein to the chloroplast; that stretch reads TTVAATKLTSLKATAGKLGYREICQVRQWAPLKSAMPHFGMLRCATSTVVKAQAQAQ. 79 to 103 lines the NADP(+) pocket; the sequence is VTGASRGIGKAIALSLGKAGCKVLV. Ser-211 is a binding site for substrate. Tyr-224 (proton acceptor) is an active-site residue.

Belongs to the short-chain dehydrogenases/reductases (SDR) family. In terms of assembly, homotetramer.

It is found in the plastid. Its subcellular location is the chloroplast. It catalyses the reaction a (3R)-hydroxyacyl-[ACP] + NADP(+) = a 3-oxoacyl-[ACP] + NADPH + H(+). Its pathway is lipid metabolism; fatty acid biosynthesis. The sequence is that of 3-oxoacyl-[acyl-carrier-protein] reductase 5, chloroplastic (bkr1) from Brassica napus (Rape).